The primary structure comprises 189 residues: UPF0232 protein MLBr00004 (189 aa).

Residues T59 to L78 are disordered.

It belongs to the UPF0232 family.

In Mycobacterium leprae (strain Br4923), this protein is UPF0232 protein MLBr00004.